Here is a 127-residue protein sequence, read N- to C-terminus: Glycine cleavage system H protein (127 aa).

Positions 22–104 (EVVIGITHFA…YEGAWMVKVE (83 aa)) constitute a Lipoyl-binding domain. Residue lysine 63 is modified to N6-lipoyllysine.

The protein belongs to the GcvH family. The glycine cleavage system is composed of four proteins: P, T, L and H. It depends on (R)-lipoate as a cofactor.

Its function is as follows. The glycine cleavage system catalyzes the degradation of glycine. The H protein shuttles the methylamine group of glycine from the P protein to the T protein. Functionally, is also involved in protein lipoylation via its role as an octanoyl/lipoyl carrier protein intermediate. This is Glycine cleavage system H protein from Bacillus cereus (strain ATCC 10987 / NRS 248).